Consider the following 405-residue polypeptide: Glucose-1-phosphate adenylyltransferase 1 (405 aa).

Residues Tyr-96, Gly-161, 176-177 (EK), and Ser-194 each bind alpha-D-glucose 1-phosphate.

The protein belongs to the bacterial/plant glucose-1-phosphate adenylyltransferase family. As to quaternary structure, homotetramer.

It catalyses the reaction alpha-D-glucose 1-phosphate + ATP + H(+) = ADP-alpha-D-glucose + diphosphate. Its pathway is glycan biosynthesis; glycogen biosynthesis. Its function is as follows. Involved in the biosynthesis of ADP-glucose, a building block required for the elongation reactions to produce glycogen. Catalyzes the reaction between ATP and alpha-D-glucose 1-phosphate (G1P) to produce pyrophosphate and ADP-Glc. The sequence is that of Glucose-1-phosphate adenylyltransferase 1 from Vibrio parahaemolyticus serotype O3:K6 (strain RIMD 2210633).